The sequence spans 1296 residues: Phosphoribosylformylglycinamidine synthase (1296 aa).

Positions 304 to 323 are disordered; sequence WPGAATGSGGEIRDEGATGR. ATP contacts are provided by residues 306–317 and Ala-677; that span reads GAATGSGGEIRD. Mg(2+) is bound by residues Asp-678, Glu-717, Asn-721, and Asp-885. Ser-887 provides a ligand contact to ATP. Over residues 1000–1013 the composition is skewed to basic and acidic residues; sequence PDCADQEHQAKQDE. The segment at 1000 to 1019 is disordered; the sequence is PDCADQEHQAKQDESDPGLN. Positions 1043–1296 constitute a Glutamine amidotransferase type-1 domain; the sequence is VAVLREQGVN…MFRNARKQLG (254 aa). Catalysis depends on Cys-1136, which acts as the Nucleophile. Residues His-1261 and Glu-1263 contribute to the active site.

In the N-terminal section; belongs to the FGAMS family. In terms of assembly, monomer.

It localises to the cytoplasm. It carries out the reaction N(2)-formyl-N(1)-(5-phospho-beta-D-ribosyl)glycinamide + L-glutamine + ATP + H2O = 2-formamido-N(1)-(5-O-phospho-beta-D-ribosyl)acetamidine + L-glutamate + ADP + phosphate + H(+). Its pathway is purine metabolism; IMP biosynthesis via de novo pathway; 5-amino-1-(5-phospho-D-ribosyl)imidazole from N(2)-formyl-N(1)-(5-phospho-D-ribosyl)glycinamide: step 1/2. Phosphoribosylformylglycinamidine synthase involved in the purines biosynthetic pathway. Catalyzes the ATP-dependent conversion of formylglycinamide ribonucleotide (FGAR) and glutamine to yield formylglycinamidine ribonucleotide (FGAM) and glutamate. The chain is Phosphoribosylformylglycinamidine synthase from Yersinia pestis bv. Antiqua (strain Nepal516).